A 293-amino-acid polypeptide reads, in one-letter code: GDT1-like protein 3 (293 aa).

The first 25 residues, 1-25, serve as a signal peptide directing secretion; the sequence is MGLISNPTRLILVATIFFLVSSISG. Transmembrane regions (helical) follow at residues 89–109, 115–135, 148–168, 200–220, 238–258, and 272–292; these read FSMI…ALMA, ATVL…STGL, TNSA…YIAW, LFSR…FLAE, AIGV…LAVV, and VATV…FYPP.

The protein belongs to the GDT1 family.

It localises to the membrane. This Arabidopsis thaliana (Mouse-ear cress) protein is GDT1-like protein 3.